The chain runs to 218 residues: Protein-methionine-sulfoxide reductase heme-binding subunit MsrQ (218 aa).

A run of 5 helical transmembrane segments spans residues 14-34 (AVHA…WQVW), 60-80 (LLLI…AVLI), 86-106 (LGLY…WLDL), 121-141 (PYIT…ITST), and 155-175 (LHML…WLVK).

Belongs to the MsrQ family. In terms of assembly, heterodimer of a catalytic subunit (MsrP) and a heme-binding subunit (MsrQ). FMN is required as a cofactor. Heme b serves as cofactor.

The protein resides in the cell inner membrane. In terms of biological role, part of the MsrPQ system that repairs oxidized periplasmic proteins containing methionine sulfoxide residues (Met-O), using respiratory chain electrons. Thus protects these proteins from oxidative-stress damage caused by reactive species of oxygen and chlorine generated by the host defense mechanisms. MsrPQ is essential for the maintenance of envelope integrity under bleach stress, rescuing a wide series of structurally unrelated periplasmic proteins from methionine oxidation. MsrQ provides electrons for reduction to the reductase catalytic subunit MsrP, using the quinone pool of the respiratory chain. The sequence is that of Protein-methionine-sulfoxide reductase heme-binding subunit MsrQ from Xanthomonas campestris pv. campestris (strain B100).